Consider the following 496-residue polypeptide: Cytochrome P450 71B12 (496 aa).

Residues 2–22 form a helical membrane-spanning segment; that stretch reads SLWYIIVAFVFFSSMIIVRII. Residue C436 participates in heme binding.

The protein belongs to the cytochrome P450 family. Heme serves as cofactor.

The protein resides in the membrane. The chain is Cytochrome P450 71B12 (CYP71B12) from Arabidopsis thaliana (Mouse-ear cress).